Consider the following 592-residue polypeptide: Pectinesterase/pectinesterase inhibitor 3 (592 aa).

Positions 1–35 (MAPSMKEIFSKDNFKKNKKLVLLSAAVALLFVAAV) are cleaved as a signal peptide. Residues 36-238 (AGISAGASKA…KITSNNRKLK (203 aa)) constitute a propeptide, removed in mature 42 kDa form. Positions 36 to 273 (AGISAGASKA…WLSAGDRRLL (238 aa)) are cleaved as a propeptide — removed in mature 38 kDa form. Residues 53 to 212 (PSSHAVLRSS…EHMCSNALAM (160 aa)) are pectinesterase inhibitor 3. 2 N-linked (GlcNAc...) asparagine glycosylation sites follow: asparagine 96 and asparagine 215. The interval 281–578 (DATVAADGSG…YTAGQFIGGG (298 aa)) is pectinesterase 3. 2 residues coordinate substrate: threonine 356 and glutamine 386. Aspartate 409 serves as the catalytic Proton donor; for pectinesterase activity. Residues cysteine 423 and cysteine 443 are joined by a disulfide bond. The active-site Nucleophile; for pectinesterase activity is aspartate 430. 3 residues coordinate substrate: glutamine 454, arginine 498, and tryptophan 500.

This sequence in the N-terminal section; belongs to the PMEI family. In the C-terminal section; belongs to the pectinesterase family. Interacts with BIIDXI and At5g11420. Binds reversibly to PMEI4, PMEI7 and PMEI8 to be inhibited; the stability of the PME3-PMEIs complexes and the inhibition of the pectin methylesterase (PME) activity is pH-dependent, based on protonation status of amino-acids at the complex interface. Expressed in roots, cotyledons, hypocotyls, seedlings, leaves, stems, flowers, dry seeds and siliques. Accumulates in etiolated hypocotyls (at protein level).

Its subcellular location is the secreted. The protein resides in the extracellular space. The protein localises to the apoplast. It is found in the cell wall. It carries out the reaction [(1-&gt;4)-alpha-D-galacturonosyl methyl ester](n) + n H2O = [(1-&gt;4)-alpha-D-galacturonosyl](n) + n methanol + n H(+). The protein operates within glycan metabolism; pectin degradation; 2-dehydro-3-deoxy-D-gluconate from pectin: step 1/5. Regulated negatively by pectinesterase inhibitors (e.g. PMEI3, PMEI4, PMEI7 and PMEI9) in a pH-dependent manner, mainly in slightly acidic conditions (pH 6.0 and 5.0), especially in dark-grown hypocotyls; this processus relies on changes in the protonation of amino acids involved in intermolecular and intramolecular interactions. Functionally, acts in the modification of cell walls via demethylesterification of cell wall pectin. Required for zinc Zn(2+) homeostasis and to monitor Zn(2+) influence on cell wall-controlled growth processes such as root cell elongation. Monitors seed germination and favors root hairs production. Prevents cruciferin seed storage proteins activity, but promotes the expression of genes involved in cell wall organization and remodeling as well as genes involved in lipid and protein metabolism, during post-germinative growth of seedlings. Confers sensitivity to Zn(2+) when overexpressed. Acts as a susceptibility factor required for the initial colonization of the host tissue by virulent pathogens including Botrytis cinerea and Pectobacterium carotovorum, probably by facilitating cell wall pectine degradation by pathogen pectic enzymes after its demethylesterification. The polypeptide is Pectinesterase/pectinesterase inhibitor 3 (Arabidopsis thaliana (Mouse-ear cress)).